Here is a 292-residue protein sequence, read N- to C-terminus: Cyclic dipurine nucleotide synthase (292 aa).

Q47 serves as a coordination point for ATP. G48 to N52 serves as a coordination point for GTP. Mg(2+) is bound by residues D61 and D63. ATP is bound by residues D63, N121–K122, and D136. Residue D136 participates in Mg(2+) binding. K197 and S216 together coordinate GTP.

Belongs to the CD-NTase family. E01 subfamily. Requires Mg(2+) as cofactor.

The enzyme catalyses 2 ATP = 3',3'-c-di-AMP + 2 diphosphate. The catalysed reaction is 2 GTP = 3',3'-c-di-GMP + 2 diphosphate. It catalyses the reaction GTP + ATP = 3',3'-cGAMP + 2 diphosphate. In terms of biological role, cyclic nucleotide synthase (second messenger synthase) of a CBASS antivirus system. CBASS (cyclic oligonucleotide-based antiphage signaling system) provides immunity against bacteriophage. The CD-NTase protein synthesizes cyclic nucleotides in response to infection; these serve as specific second messenger signals. The signals activate a diverse range of effectors, leading to bacterial cell death and thus abortive phage infection. A type I-A(GA) CBASS system. Cyclic dinucleotide synthase that catalyzes the synthesis of 3'3'-cyclic GMP-AMP (cGAMP) from GTP and ATP, and of c-di-AMP and c-di-GMP, that are second messengers for cell signal transduction. The protein is Cyclic dipurine nucleotide synthase of Elizabethkingia meningoseptica (Chryseobacterium meningosepticum).